The sequence spans 947 residues: Microtubule cross-linking factor 3 (947 aa).

The first 21 residues, 1 to 21 (MSQPPIGGAAPATAAASPAAA), serve as a signal peptide directing secretion. Disordered stretches follow at residues 1–251 (MSQP…SYWK), 266–368 (KERA…TLKN), and 496–524 (LSLK…DNED). Low complexity-rich tracts occupy residues 9 to 24 (AAPA…AATE), 72 to 81 (QQQLQQQQQQ), and 109 to 137 (APKG…ALGG). Basic and acidic residues predominate over residues 141–151 (GPPEEPPRELE). A compositionally biased stretch (gly residues) spans 164 to 180 (GEGGGGGGEGGGAGGGS). The segment covering 214 to 236 (ASPSPSSSSAGKTPGTGSRNSGS) has biased composition (low complexity). Positions 237–248 (GVAGGGSGGGGS) are enriched in gly residues. 2 stretches are compositionally biased toward low complexity: residues 287 to 297 (SSRSSPVSGPP) and 304 to 325 (AVAS…AEGS). Positions 342–726 (HPQQLQEQEE…GKVMQLQYEN (385 aa)) form a coiled coil. Basic and acidic residues-rich tracts occupy residues 355–368 (EMEK…TLKN) and 496–513 (LSLK…EKKA). Serine 569 carries the phosphoserine modification. The disordered stretch occupies residues 743-786 (GIRGSPRDSDAESDAGKKESDDDSRPPHRKREGPIGGESDSEEV). Over residues 747–768 (SPRDSDAESDAGKKESDDDSRP) the composition is skewed to basic and acidic residues. Serine 781 carries the phosphoserine modification. The stretch at 811 to 835 (DRQQMKDIRSEAERLGKTIDRLIAD) forms a coiled coil. The chain crosses the membrane as a helical span at residues 915 to 935 (PIILLILILVLFSSLSYTTIF).

This sequence belongs to the MTCL family.

It localises to the membrane. This Homo sapiens (Human) protein is Microtubule cross-linking factor 3.